We begin with the raw amino-acid sequence, 498 residues long: Dynein regulatory complex subunit 2 (498 aa).

Coiled-coil stretches lie at residues 98–160 (VIKS…RKTI), 250–311 (KDEK…KAQR), and 417–441 (SLRH…QYLD).

Belongs to the DRC2 family. In terms of assembly, component of the nexin-dynein regulatory complex (N-DRC). Interacts with DRC1.

Its subcellular location is the cytoplasm. It is found in the cytoskeleton. It localises to the flagellum basal body. The protein resides in the cell projection. The protein localises to the cilium. Its subcellular location is the flagellum. It is found in the flagellum axoneme. Component of the nexin-dynein regulatory complex (N-DRC), a key regulator of ciliary/flagellar motility which maintains the alignment and integrity of the distal axoneme and regulates microtubule sliding in motile axonemes. Plays a critical role in the assembly of N-DRC and also stabilizes the assembly of multiple inner dynein arms and radial spokes. Coassembles with DRC1 to form a central scaffold needed for assembly of the N-DRC and its attachment to the outer doublet microtubules. This Bos taurus (Bovine) protein is Dynein regulatory complex subunit 2 (CCDC65).